The primary structure comprises 245 residues: Ribonuclease 3 (245 aa).

Positions 19-148 (FKLFQEKIGI…FIGALYLDQG (130 aa)) constitute an RNase III domain. Glutamate 61 contributes to the Mg(2+) binding site. The active site involves aspartate 65. Aspartate 134 and glutamate 137 together coordinate Mg(2+). Glutamate 137 is an active-site residue. The region spanning 174–243 (DYKSQLQELI…AAEALKKLKE (70 aa)) is the DRBM domain.

This sequence belongs to the ribonuclease III family. In terms of assembly, homodimer. Mg(2+) is required as a cofactor.

It localises to the cytoplasm. The catalysed reaction is Endonucleolytic cleavage to 5'-phosphomonoester.. In terms of biological role, digests double-stranded RNA. Involved in the processing of primary rRNA transcript to yield the immediate precursors to the large and small rRNAs (23S and 16S). Processes some mRNAs, and tRNAs when they are encoded in the rRNA operon. Processes pre-crRNA and tracrRNA of type II CRISPR loci if present in the organism. This chain is Ribonuclease 3, found in Bacillus cereus (strain 03BB102).